Reading from the N-terminus, the 100-residue chain is Putative septation protein SpoVG (100 aa).

The protein belongs to the SpoVG family.

Functionally, could be involved in septation. This Clostridium novyi (strain NT) protein is Putative septation protein SpoVG.